Reading from the N-terminus, the 172-residue chain is CYLSEDHMLGARENLRLLARMNRLSPHPCLQDRKDFGLPQEMVEGNQLQKDQAISVLHEMLQQCFNLFYTEHSSAAWNTTLLEQLCTGLQQQLEDLDACLGQVMEEKDSDMGRMGPILTVKKYFQGIHVYLKEKEYSDCAWEIIRMEMMRALSSSTTLQKRLRKMGGDLNSL.

Intrachain disulfides connect Cys1–Cys99 and Cys29–Cys139. An N-linked (GlcNAc...) asparagine glycan is attached at Asn78.

Belongs to the alpha/beta interferon family. IFN-alphaII subfamily. Constitutively and exclusively expressed in the mononuclear cells of the extraembryonic trophectoderm.

It localises to the secreted. In terms of biological role, paracrine hormone primarily responsible for maternal recognition of pregnancy. Interacts with endometrial receptors, probably type I interferon receptors, and blocks estrogen receptor expression, preventing the estrogen-induced increase in oxytocin receptor expression in the endometrium. This results in the suppression of the pulsatile endometrial release of the luteolytic hormone prostaglandin F2-alpha, hindering the regression of the corpus luteum (luteolysis) and therefore a return to ovarian cyclicity. This, and a possible direct effect of IFN-tau on prostaglandin synthesis, leads in turn to continued ovarian progesterone secretion, which stimulates the secretion by the endometrium of the nutrients required for the growth of the conceptus. In summary, displays particularly high antiviral and antiproliferative potency concurrently with particular weak cytotoxicity, high antiluteolytic activity and immunomodulatory properties. In contrast with other IFNs, IFN-tau is not virally inducible. This chain is Interferon tau-2 (IFNT2), found in Bos taurus (Bovine).